The primary structure comprises 115 residues: Large ribosomal subunit protein bL35m (115 aa).

Belongs to the bacterial ribosomal protein bL35 family.

The protein resides in the mitochondrion. This chain is Large ribosomal subunit protein bL35m, found in Saccharomyces cerevisiae (strain YJM789) (Baker's yeast).